A 226-amino-acid polypeptide reads, in one-letter code: ATP-dependent dethiobiotin synthetase BioD (226 aa).

12 to 17 (GVGKTV) is an ATP binding site. Threonine 16 provides a ligand contact to Mg(2+). Lysine 37 is an active-site residue. Threonine 41 lines the substrate pocket. ATP contacts are provided by residues aspartate 49, 108 to 111 (EGAG), 169 to 170 (GS), and 197 to 199 (PAG). 2 residues coordinate Mg(2+): aspartate 49 and glutamate 108.

This sequence belongs to the dethiobiotin synthetase family. As to quaternary structure, homodimer. Mg(2+) serves as cofactor.

It is found in the cytoplasm. It catalyses the reaction (7R,8S)-7,8-diammoniononanoate + CO2 + ATP = (4R,5S)-dethiobiotin + ADP + phosphate + 3 H(+). Its pathway is cofactor biosynthesis; biotin biosynthesis; biotin from 7,8-diaminononanoate: step 1/2. Its function is as follows. Catalyzes a mechanistically unusual reaction, the ATP-dependent insertion of CO2 between the N7 and N8 nitrogen atoms of 7,8-diaminopelargonic acid (DAPA, also called 7,8-diammoniononanoate) to form a ureido ring. The protein is ATP-dependent dethiobiotin synthetase BioD of Mycobacterium leprae (strain Br4923).